We begin with the raw amino-acid sequence, 344 residues long: tRNA N6-adenosine threonylcarbamoyltransferase (344 aa).

Fe cation-binding residues include His112 and His116. Residues 134-138, Asp167, Gly180, and Asn280 contribute to the substrate site; that span reads LASGG. A Fe cation-binding site is contributed by Asp308.

This sequence belongs to the KAE1 / TsaD family. It depends on Fe(2+) as a cofactor.

It is found in the cytoplasm. The enzyme catalyses L-threonylcarbamoyladenylate + adenosine(37) in tRNA = N(6)-L-threonylcarbamoyladenosine(37) in tRNA + AMP + H(+). Its function is as follows. Required for the formation of a threonylcarbamoyl group on adenosine at position 37 (t(6)A37) in tRNAs that read codons beginning with adenine. Is involved in the transfer of the threonylcarbamoyl moiety of threonylcarbamoyl-AMP (TC-AMP) to the N6 group of A37, together with TsaE and TsaB. TsaD likely plays a direct catalytic role in this reaction. The sequence is that of tRNA N6-adenosine threonylcarbamoyltransferase from Rickettsia conorii (strain ATCC VR-613 / Malish 7).